Consider the following 354-residue polypeptide: Ferrochelatase (354 aa).

H191 and E271 together coordinate Fe cation.

It belongs to the ferrochelatase family.

It localises to the cytoplasm. It catalyses the reaction heme b + 2 H(+) = protoporphyrin IX + Fe(2+). The protein operates within porphyrin-containing compound metabolism; protoheme biosynthesis; protoheme from protoporphyrin-IX: step 1/1. Functionally, catalyzes the ferrous insertion into protoporphyrin IX. This Rickettsia bellii (strain OSU 85-389) protein is Ferrochelatase.